The sequence spans 175 residues: Cytidylate kinase (175 aa).

7–15 (GQPGSGKTS) contacts ATP.

It belongs to the cytidylate kinase family. Type 2 subfamily.

The protein resides in the cytoplasm. The enzyme catalyses CMP + ATP = CDP + ADP. It catalyses the reaction dCMP + ATP = dCDP + ADP. The sequence is that of Cytidylate kinase from Methanocella arvoryzae (strain DSM 22066 / NBRC 105507 / MRE50).